We begin with the raw amino-acid sequence, 361 residues long: MSYKENLNPSSYTSKFTTPSSATAAQRVLRKEPYVSTFTTPSDNLLAQRTQLSRITPSASSSVPGRVAVSTEMPSQNTALAEMPKRKFTIDDFDIGRPLGKGKFGNVYLAREKQNKFIMALKVLFKSQLEKEGVEHQLRREIEIQSHLRHPNILRMYNYFHDRKRIYLMLEFAPRGELYKELQKHGRFDEQRSATFMEELADALHYCHERKVIHRDIKPENLLMGYKGELKIADFGWSVHAPSLRRRTMCGTLDYLPPEMIEGKTHDEKVDLWCAGVLCYEFLVGMPPFDSPSHTETHRRIVNVDLKFPPFLSDGSKDLISKLLRYHPPQRLPLKGVMEHPWVKANSRRVLPPVYQSTQSK.

The Protein kinase domain occupies 93–343 (FDIGRPLGKG…LKGVMEHPWV (251 aa)). Residues 99–107 (LGKGKFGNV) and K122 each bind ATP. Residue D216 is the Proton acceptor of the active site.

It belongs to the protein kinase superfamily. Ser/Thr protein kinase family. Aurora subfamily. Component of the CPC at least composed of survivin/birc5, incenp, cdca8/borealin and/or cdca9/dasra-A, and aurkb/aurora-B. Interacts directly (via N-terminus and kinase domain) with incenp (via C terminus), and may weakly interact (via N-terminus) with birc5.1 to stabilize the complex. Interacts with mtus1. The cofactor is Mg(2+). Post-translationally, phosphorylated, stimulates kinase activity.

Its subcellular location is the nucleus. It localises to the chromosome. The catalysed reaction is L-seryl-[protein] + ATP = O-phospho-L-seryl-[protein] + ADP + H(+). It catalyses the reaction L-threonyl-[protein] + ATP = O-phospho-L-threonyl-[protein] + ADP + H(+). Its activity is regulated as follows. Kinase activity is stimulated by both birc5/survivin-binding and cell-cycle specific phosphorylation. In terms of biological role, serine/threonine-protein kinase component of the chromosomal passenger complex (CPC), a complex that acts as a key regulator of mitosis. The CPC complex has essential functions at the centromere in ensuring correct chromosome alignment and segregation and is required for chromatin-induced microtubule stabilization and spindle assembly. Involved in the bipolar attachment of spindle microtubules to kinetochores and is a key regulator for the onset of cytokinesis during mitosis. Required for central/midzone spindle assembly and cleavage furrow formation. Key component of the cytokinesis checkpoint, a process required to delay abscission to prevent both premature resolution of intercellular chromosome bridges and accumulation of DNA damage. Phosphorylates 'Ser-10' of histone H3 during mitosis. In Xenopus laevis (African clawed frog), this protein is Aurora kinase B-A (aurkb-a).